A 292-amino-acid chain; its full sequence is 4-hydroxy-tetrahydrodipicolinate synthase (292 aa).

Residue Thr-45 coordinates pyruvate. Tyr-133 (proton donor/acceptor) is an active-site residue. Residue Lys-161 is the Schiff-base intermediate with substrate of the active site. Ile-203 serves as a coordination point for pyruvate.

The protein belongs to the DapA family. As to quaternary structure, homodimer.

The protein localises to the cytoplasm. The enzyme catalyses L-aspartate 4-semialdehyde + pyruvate = (2S,4S)-4-hydroxy-2,3,4,5-tetrahydrodipicolinate + H2O + H(+). Its pathway is amino-acid biosynthesis; L-lysine biosynthesis via DAP pathway; (S)-tetrahydrodipicolinate from L-aspartate: step 3/4. In terms of biological role, catalyzes the condensation of (S)-aspartate-beta-semialdehyde [(S)-ASA] and pyruvate to 4-hydroxy-tetrahydrodipicolinate (HTPA). The protein is 4-hydroxy-tetrahydrodipicolinate synthase of Pseudomonas savastanoi pv. phaseolicola (strain 1448A / Race 6) (Pseudomonas syringae pv. phaseolicola (strain 1448A / Race 6)).